The sequence spans 65 residues: Large ribosomal subunit protein uL29 (65 aa).

It belongs to the universal ribosomal protein uL29 family.

The sequence is that of Large ribosomal subunit protein uL29 from Thioalkalivibrio sulfidiphilus (strain HL-EbGR7).